Here is a 228-residue protein sequence, read N- to C-terminus: ATP-dependent dethiobiotin synthetase BioD (228 aa).

12 to 17 contacts ATP; that stretch reads EIGKTT. Thr-16 serves as a coordination point for Mg(2+). Lys-37 is a catalytic residue. Ser-41 is a binding site for substrate. ATP is bound by residues Asp-54, 116–119, and 205–207; these read EGAG and PRL. 2 residues coordinate Mg(2+): Asp-54 and Glu-116.

It belongs to the dethiobiotin synthetase family. As to quaternary structure, homodimer. Mg(2+) is required as a cofactor.

Its subcellular location is the cytoplasm. The catalysed reaction is (7R,8S)-7,8-diammoniononanoate + CO2 + ATP = (4R,5S)-dethiobiotin + ADP + phosphate + 3 H(+). It functions in the pathway cofactor biosynthesis; biotin biosynthesis; biotin from 7,8-diaminononanoate: step 1/2. Its function is as follows. Catalyzes a mechanistically unusual reaction, the ATP-dependent insertion of CO2 between the N7 and N8 nitrogen atoms of 7,8-diaminopelargonic acid (DAPA, also called 7,8-diammoniononanoate) to form a ureido ring. The polypeptide is ATP-dependent dethiobiotin synthetase BioD (Pseudomonas aeruginosa (strain ATCC 15692 / DSM 22644 / CIP 104116 / JCM 14847 / LMG 12228 / 1C / PRS 101 / PAO1)).